The sequence spans 255 residues: Adenosine 5'-phosphosulfate reductase (255 aa).

The disordered stretch occupies residues 1–39; that stretch reads MMTAEVRTPEQGGGPLTTEPRAPRSAPGHADASAPAFGP. [4Fe-4S] cluster is bound by residues cysteine 137, cysteine 138, cysteine 220, and cysteine 223. The Nucleophile; cysteine thiosulfonate intermediate role is filled by cysteine 246.

It belongs to the PAPS reductase family. CysH subfamily. Requires [4Fe-4S] cluster as cofactor.

The protein resides in the cytoplasm. The catalysed reaction is [thioredoxin]-disulfide + sulfite + AMP + 2 H(+) = adenosine 5'-phosphosulfate + [thioredoxin]-dithiol. It participates in sulfur metabolism; hydrogen sulfide biosynthesis; sulfite from sulfate. Its function is as follows. Catalyzes the formation of sulfite from adenosine 5'-phosphosulfate (APS) using thioredoxin as an electron donor. The polypeptide is Adenosine 5'-phosphosulfate reductase (Deinococcus radiodurans (strain ATCC 13939 / DSM 20539 / JCM 16871 / CCUG 27074 / LMG 4051 / NBRC 15346 / NCIMB 9279 / VKM B-1422 / R1)).